The following is a 72-amino-acid chain: Translation initiation factor IF-1 1 (72 aa).

Residues Met-1–Lys-72 enclose the S1-like domain.

Belongs to the IF-1 family. Component of the 30S ribosomal translation pre-initiation complex which assembles on the 30S ribosome in the order IF-2 and IF-3, IF-1 and N-formylmethionyl-tRNA(fMet); mRNA recruitment can occur at any time during PIC assembly.

Its subcellular location is the cytoplasm. In terms of biological role, one of the essential components for the initiation of protein synthesis. Stabilizes the binding of IF-2 and IF-3 on the 30S subunit to which N-formylmethionyl-tRNA(fMet) subsequently binds. Helps modulate mRNA selection, yielding the 30S pre-initiation complex (PIC). Upon addition of the 50S ribosomal subunit IF-1, IF-2 and IF-3 are released leaving the mature 70S translation initiation complex. This is Translation initiation factor IF-1 1 from Methylobacillus flagellatus (strain ATCC 51484 / DSM 6875 / VKM B-1610 / KT).